Here is a 921-residue protein sequence, read N- to C-terminus: 2-oxoadipate dehydrogenase complex component E1 (921 aa).

An N6-succinyllysine mark is found at lysine 184 and lysine 189. The tract at residues 300–319 (GKTRGRQQSREDGDYSPNGS) is disordered. Residues lysine 801 and lysine 819 each carry the N6-succinyllysine modification.

Belongs to the alpha-ketoglutarate dehydrogenase family. The 2-oxoadipate dehydrogenase complex is composed of OADH (2-oxoadipate dehydrogenase; E1a), DLST (dihydrolipoamide succinyltransferase; E2) and DLD (dihydrolipoamide dehydrogenase; E3). E1a functional unit is a dimer. Thiamine diphosphate serves as cofactor.

Its subcellular location is the mitochondrion. It catalyses the reaction N(6)-[(R)-lipoyl]-L-lysyl-[protein] + 2-oxoadipate + H(+) = N(6)-[(R)-S(8)-glutaryldihydrolipoyl]-L-lysyl-[protein] + CO2. It participates in amino-acid degradation. In terms of biological role, 2-oxoadipate dehydrogenase (E1a) component of the 2-oxoadipate dehydrogenase complex (OADHC). Participates in the first step, rate limiting for the overall conversion of 2-oxoadipate (alpha-ketoadipate) to glutaryl-CoA and CO(2) catalyzed by the whole OADHC. Catalyzes the irreversible decarboxylation of 2-oxoadipate via the thiamine diphosphate (ThDP) cofactor and subsequent transfer of the decarboxylated acyl intermediate on an oxidized dihydrolipoyl group that is covalently amidated to the E2 enzyme (dihydrolipoyllysine-residue succinyltransferase or DLST). Can catalyze the decarboxylation of 2-oxoglutarate in vitro, but at a much lower rate than 2-oxoadipate. Responsible for the last step of L-lysine, L-hydroxylysine and L-tryptophan catabolism with the common product being 2-oxoadipate. In Mus musculus (Mouse), this protein is 2-oxoadipate dehydrogenase complex component E1 (Dhtkd1).